Consider the following 374-residue polypeptide: Spore germination protein B3 (374 aa).

Residues 1 to 19 (MKTASKFSVMFFMLLALCG) form the signal peptide. The N-palmitoyl cysteine moiety is linked to residue Cys-20. Cys-20 is lipidated: S-diacylglycerol cysteine.

Belongs to the GerABKC lipoprotein family.

The protein resides in the cell membrane. In terms of biological role, involved in the response to the germinative mixture of L-asparagine, glucose, fructose and potassium ions (AGFK). Cannot stimulate germination in the absence of gerD and gerK gene products (fructose and glucose receptors respectively). This Bacillus subtilis (strain 168) protein is Spore germination protein B3 (gerBC).